Here is a 350-residue protein sequence, read N- to C-terminus: Cytochrome c biogenesis protein CcsA (350 aa).

8 helical membrane passes run N23–P43, L47–L67, L82–H102, W108–L128, V153–I173, L258–N278, W293–W313, and A319–L339.

Belongs to the CcmF/CycK/Ccl1/NrfE/CcsA family. As to quaternary structure, may interact with ccs1.

The protein localises to the cellular thylakoid membrane. Required during biogenesis of c-type cytochromes (cytochrome c6 and cytochrome f) at the step of heme attachment. The chain is Cytochrome c biogenesis protein CcsA from Synechococcus sp. (strain JA-2-3B'a(2-13)) (Cyanobacteria bacterium Yellowstone B-Prime).